Here is an 87-residue protein sequence, read N- to C-terminus: Small ribosomal subunit protein uS15 (87 aa).

This sequence belongs to the universal ribosomal protein uS15 family. As to quaternary structure, part of the 30S ribosomal subunit. Forms a bridge to the 50S subunit in the 70S ribosome, contacting the 23S rRNA.

In terms of biological role, one of the primary rRNA binding proteins, it binds directly to 16S rRNA where it helps nucleate assembly of the platform of the 30S subunit by binding and bridging several RNA helices of the 16S rRNA. Forms an intersubunit bridge (bridge B4) with the 23S rRNA of the 50S subunit in the ribosome. This Clostridium beijerinckii (strain ATCC 51743 / NCIMB 8052) (Clostridium acetobutylicum) protein is Small ribosomal subunit protein uS15.